Consider the following 266-residue polypeptide: Proteasome subunit alpha type-1 (266 aa).

Belongs to the peptidase T1A family. In terms of assembly, the 26S proteasome consists of a 20S proteasome core and two 19S regulatory subunits. The 20S proteasome core is composed of 28 subunits that are arranged in four stacked rings, resulting in a barrel-shaped structure. The two end rings are each formed by seven alpha subunits, and the two central rings are each formed by seven beta subunits. The catalytic chamber with the active sites is on the inside of the barrel.

The protein resides in the cytoplasm. Its subcellular location is the nucleus. The proteasome is a multicatalytic proteinase complex which is characterized by its ability to cleave peptides with Arg, Phe, Tyr, Leu, and Glu adjacent to the leaving group at neutral or slightly basic pH. The proteasome has an ATP-dependent proteolytic activity. The chain is Proteasome subunit alpha type-1 from Trypanosoma brucei brucei.